The following is a 210-amino-acid chain: NADH dehydrogenase [ubiquinone] iron-sulfur protein 8, mitochondrial (210 aa).

The N-terminal 34 residues, 1–34, are a transit peptide targeting the mitochondrion; that stretch reads MRCLTTPVLLRALAQAARAGPPGGRSLHSSAVAA. 4Fe-4S ferredoxin-type domains are found at residues 102–131 and 141–170; these read RRYP…IEAE and TRYD…EGPN. Residues Cys-111, Cys-114, Cys-117, Cys-121, Cys-150, Cys-153, Cys-156, and Cys-160 each coordinate [4Fe-4S] cluster.

It belongs to the complex I 23 kDa subunit family. In terms of assembly, core subunit of respiratory chain NADH dehydrogenase (Complex I) which is composed of 45 different subunits. This is a component of the iron-sulfur (IP) fragment of the enzyme. Interacts with RAB5IF. It depends on [4Fe-4S] cluster as a cofactor.

It localises to the mitochondrion inner membrane. It carries out the reaction a ubiquinone + NADH + 5 H(+)(in) = a ubiquinol + NAD(+) + 4 H(+)(out). Core subunit of the mitochondrial membrane respiratory chain NADH dehydrogenase (Complex I) which catalyzes electron transfer from NADH through the respiratory chain, using ubiquinone as an electron acceptor. Essential for the catalytic activity and assembly of complex I. This chain is NADH dehydrogenase [ubiquinone] iron-sulfur protein 8, mitochondrial (NDUFS8), found in Gorilla gorilla gorilla (Western lowland gorilla).